The following is a 143-amino-acid chain: Peptide methionine sulfoxide reductase MsrB (143 aa).

A MsrB domain is found at 16-139 (DAELRRRLTP…NSAALNFESR (124 aa)). Zn(2+) is bound by residues Cys-55, Cys-58, Cys-104, and Cys-107. The active-site Nucleophile is Cys-128.

It belongs to the MsrB Met sulfoxide reductase family. Zn(2+) is required as a cofactor.

The catalysed reaction is L-methionyl-[protein] + [thioredoxin]-disulfide + H2O = L-methionyl-(R)-S-oxide-[protein] + [thioredoxin]-dithiol. The polypeptide is Peptide methionine sulfoxide reductase MsrB (Burkholderia cenocepacia (strain HI2424)).